The following is a 498-amino-acid chain: Isoflavone 2'-hydroxylase (498 aa).

A helical transmembrane segment spans residues 3 to 23 (ILSYLCYSLFYLSIFFIIRLL). Residue Cys-436 participates in heme binding.

Belongs to the cytochrome P450 family. Requires heme as cofactor. As to expression, expressed constitutively in roots, but present at very low levels in uninfected stems and leaves.

It is found in the endoplasmic reticulum membrane. It catalyses the reaction formononetin + reduced [NADPH--hemoprotein reductase] + O2 = 2'-hydroxyformononetin + oxidized [NADPH--hemoprotein reductase] + H2O + H(+). Involved in the biosynthesis of the pterocarpin phytoalexins. Acts on isoflavones with a 4'-methoxy group on the B-ring, such as formononetin and biochanin A, and on pseudobaptigenin. Has a low activity with daidzein and genistein and no activity with the 7-O-methylated isoflavonoids isoformononetin and prunetin. The polypeptide is Isoflavone 2'-hydroxylase (Medicago truncatula (Barrel medic)).